The chain runs to 135 residues: Type 3 secretion system stator protein (135 aa).

This sequence belongs to the SctL stator family. The core secretion machinery of the T3SS is composed of approximately 20 different proteins, including cytoplasmic components, a base, an export apparatus and a needle. This subunit is part of the cytosolic complex.

It is found in the cytoplasm. Its function is as follows. Component of the type III secretion system (T3SS), also called injectisome, which is used to inject bacterial effector proteins into eukaryotic host cells. Acts as a regulator of the HrcN/SctN ATPase activity. The chain is Type 3 secretion system stator protein from Rhizobium fredii (Sinorhizobium fredii).